The sequence spans 181 residues: HGPRTase-like protein 2 (181 aa).

The protein belongs to the purine/pyrimidine phosphoribosyltransferase family. Archaeal HPRT subfamily.

Functionally, may catalyze a purine salvage reaction, the substrate is unknown. The protein is HGPRTase-like protein 2 of Natrialba magadii (strain ATCC 43099 / DSM 3394 / CCM 3739 / CIP 104546 / IAM 13178 / JCM 8861 / NBRC 102185 / NCIMB 2190 / MS3) (Natronobacterium magadii).